A 3419-amino-acid polypeptide reads, in one-letter code: Genome polyprotein (3419 aa).

The tract at residues 1 to 25 (MKNPKEEIRRIRIVNMLKRGVARVN) is disordered. Topologically, residues 1 to 104 (MKNPKEEIRR…INARKERKRR (104 aa)) are cytoplasmic. A hydrophobic; homodimerization of capsid protein C region spans residues 37–72 (LLLGHGPIRMVLAILAFLRFTAIKPSLGLINRWGSV). Residues 105–122 (GADTSIGIIGLLLTTAMA) constitute a propeptide, ER anchor for capsid protein C, removed in mature form by serine protease NS3. A helical transmembrane segment spans residues 105–125 (GADTSIGIIGLLLTTAMAAEI). At 126 to 249 (TRRGSAYYMY…YTKHLIKVEN (124 aa)) the chain is on the extracellular side. N192 is a glycosylation site (N-linked (GlcNAc...) asparagine; by host). The helical transmembrane segment at 250 to 269 (WIFRNPGFALVAVAIAWLLG) threads the bilayer. The Cytoplasmic segment spans residues 270–274 (SSTSQ). A helical membrane pass occupies residues 275–290 (KVIYLVMILLIAPAYS). Topologically, residues 291-741 (IRCIGVSNRD…HQIFGAAFKS (451 aa)) are extracellular. Cysteines 293 and 320 form a disulfide. Residue K328 forms a Glycyl lysine isopeptide (Lys-Gly) (interchain with G-Cter in ubiquitin) linkage. 7 cysteine pairs are disulfide-bonded: C350–C406, C350–C411, C364–C395, C382–C406, C382–C411, C476–C577, and C594–C625. The tract at residues 388-401 (DRGWGNGCGLFGKG) is fusion peptide. Residue K567 forms a Glycyl lysine isopeptide (Lys-Gly) (interchain with G-Cter in ubiquitin) linkage. The helical transmembrane segment at 742–763 (LFGGMSWFSQILIGTLLVWLGL) threads the bilayer. The Cytoplasmic portion of the chain corresponds to 764-769 (NTKNGS). A helical membrane pass occupies residues 770-790 (ISLTCLALGGVMIFLSTAVSA). Over 791-1173 (DVGCSVDFSK…EGLKKRMTTK (383 aa)) the chain is Lumenal. Disulfide bonds link C794-C805, C845-C933, C969-C1013, C1070-C1119, C1081-C1102, and C1103-C1106. Residues N920 and N997 are each glycosylated (N-linked (GlcNAc...) asparagine; by host). A helical membrane pass occupies residues 1174–1194 (IIMSTSMAVLVVMILGGFSMS). Over 1195–1216 (DLAKLVILMGATFAEMNTGGDV) the chain is Cytoplasmic. Residues 1217 to 1237 (AHLALVAAFKVRPALLVSFIF) form a helical membrane-spanning segment. Residues 1238 to 1266 (RANWTPRESMLLALASCLLQTAISALEGD) are Lumenal-facing. The helical transmembrane segment at 1267-1287 (LMVLINGFALAWLAIRAMAVP) threads the bilayer. At 1288 to 1291 (RTDN) the chain is on the cytoplasmic side. Residues 1292–1312 (IALPILAALTPLARGTLLVAW) form a helical membrane-spanning segment. At 1313-1341 (RAGLATCGGIMLLSLKGKGSVKKNLPFVM) the chain is on the lumenal side. A helical transmembrane segment spans residues 1342–1362 (ALGLTAVRVVDPINVVGLLLL). Over 1363–1369 (TRSGKRS) the chain is Cytoplasmic. Residues 1370–1390 (WPPSEVLTAVGLICALAGGFA) form a helical membrane-spanning segment. Topologically, residues 1391-1393 (KAD) are lumenal. The helical transmembrane segment at 1394–1414 (IEMAGPMAAVGLLIVSYVVSG) threads the bilayer. At 1415–1468 (KSVDMYIERAGDITWEKDAEVTGNSPRLDVALDESGDFSLVEEDGPPMREIILK) the chain is on the cytoplasmic side. The interacts with and activates NS3 protease stretch occupies residues 1421–1460 (IERAGDITWEKDAEVTGNSPRLDVALDESGDFSLVEEDGP). Residues 1425–1447 (GDITWEKDAEVTGNSPRLDVALD) are disordered. The segment at residues 1469 to 1489 (VVLMAICGMNPIAIPFAAGAW) is an intramembrane region (helical). At 1490-2166 (YVYVKTGKRS…KAAAAQLPET (677 aa)) the chain is on the lumenal side. In terms of domain architecture, Peptidase S7 spans 1499–1676 (SGALWDVPAP…KREEETPVEC (178 aa)). Active-site charge relay system; for serine protease NS3 activity residues include H1549, D1573, and S1633. Residues 1679–1835 (PSMLKKKQLT…DSNSPIMDTE (157 aa)) enclose the Helicase ATP-binding domain. Positions 1683-1686 (KKKQ) are important for RNA-binding. 1692-1699 (LHPGAGKT) is an ATP binding site. Residues 1783 to 1786 (DEAH) carry the DEAH box motif. Positions 1830-2009 (PIMDTEVEVP…GLIASLYRPE (180 aa)) constitute a Helicase C-terminal domain. N6-acetyllysine; by host is present on K1887. Residues 2167 to 2187 (LETIMLLGLLGTVSLGIFFVL) traverse the membrane as a helical segment. Residues 2188 to 2191 (MRNK) lie on the Lumenal side of the membrane. Residues 2192 to 2212 (GIGKMGFGMVTLGASAWLMWL) constitute an intramembrane region (helical). Residues 2213–2214 (SE) are Cytoplasmic-facing. A helical membrane pass occupies residues 2215-2235 (IEPARIACVLIVVFLLLVVLI). The Lumenal portion of the chain corresponds to 2236–2250 (PEPEKQRSPQDNQMA). The segment at residues 2251-2265 (IIIMVAVGLLGLITA) is an intramembrane region (helical). Residues 2266–2303 (NELGWLERTKNDIAHLMGRREEGATMGFSMDIDLRPAS) are Lumenal-facing. Positions 2304 to 2324 (AWAIYAALTTLITPAVQHAVT) form an intramembrane region, helical. Residues 2325-2340 (TSYNNYSLMAMATQAG) lie on the Lumenal side of the membrane. A helical transmembrane segment spans residues 2341–2361 (VLFGMGKGMPFMHGDLGVPLL). Topologically, residues 2362-2371 (MMGCYSQLTP) are cytoplasmic. A helical membrane pass occupies residues 2372 to 2392 (LTLIVAIILLVAHYMYLIPGL). The Lumenal segment spans residues 2393–2437 (QAAAARAAQKRTAAGIMKNPVVDGIVVTDIDTMTIDPQVEKKMGQ). The helical transmembrane segment at 2438–2458 (VLLIAVAISSAVLLRTAWGWG) threads the bilayer. Over 2459-3419 (EAGALITAAT…GEEGSTPGVL (961 aa)) the chain is Cytoplasmic. Positions 2517–2781 (GGGTGETLGE…DVNLGSGTRA (265 aa)) constitute an mRNA cap 0-1 NS5-type MT domain. Positions 2529, 2532, 2533, 2535, 2540, and 2544 each coordinate mRNA. 2529-2535 (KARLNQM) serves as a coordination point for GTP. Position 2572 (S2572) interacts with S-adenosyl-L-methionine. S2572 is subject to Phosphoserine. The For 2'-O-MTase activity role is filled by K2577. An SUMO-interacting motif (SIM) region spans residues 2593–2596 (VVDL). S-adenosyl-L-methionine-binding residues include G2602, W2603, T2620, K2621, H2626, E2627, D2647, V2648, D2662, and I2663. Catalysis depends on D2662, which acts as the For 2'-O-MTase activity. 2665–2671 (ESSSSPE) lines the GTP pocket. S2666 contacts mRNA. The active-site For 2'-O-MTase activity is K2698. Positions 2729 and 2731 each coordinate mRNA. Position 2729-2731 (2729-2731 (RNS)) interacts with GTP. E2734 (for 2'-O-MTase activity) is an active-site residue. Residue Y2736 coordinates S-adenosyl-L-methionine. A Nuclear localization signal (NLS) motif is present at residues 2904–2910 (KRKRPRV). 4 residues coordinate Zn(2+): E2955, H2959, C2964, and C2967. The RdRp catalytic domain maps to 3045–3195 (GKMYADDTAG…KPIDDRFAHA (151 aa)). Residues H3230, C3246, and C3365 each coordinate Zn(2+).

It in the N-terminal section; belongs to the class I-like SAM-binding methyltransferase superfamily. mRNA cap 0-1 NS5-type methyltransferase family. Homodimer. Interacts with host SERTAD3; this interaction promotes capsid protein C degradation. Interacts with host CAPRIN1; this interaction is probably linked to the inhibition of stress granules formation by the virus. Interacts with host G3BP1; this interaction is probably linked to the inhibition of stress granules formation by the virus. As to quaternary structure, forms heterodimers with envelope protein E in the endoplasmic reticulum and Golgi. Interacts with non-structural protein 2A. In terms of assembly, homodimer; in the endoplasmic reticulum and Golgi. Interacts with host TYRO3, AXL and DC-SIGN proteins. Interacts with non-structural protein 2A. Interacts with host HAVCR1; this interaction likely mediates virus attachment to host cell. Interacts with host NCAM1. Interacts with host HSPA5. Interacts with Aedes aegypti SRPN25, APY and venom allergen-1 salivary proteins; the interactions do not affect Zika virus replication in human endothelial cells and keratinocytes. Homodimer; Homohexamer when secreted. Interacts with host TBK1. Interacts with host USP8. Interacts with envelope protein E. Interacts with host HSPA5. As to quaternary structure, interacts with the structural protein prM/E complex, and the NS2B/NS3 protease complex. In terms of assembly, forms a heterodimer with serine protease NS3. May form homooligomers. Interacts with human SPCS1. Interacts with non-structural protein 2A. Forms a heterodimer with NS2B. Interacts with NS4B. Interacts with unphosphorylated RNA-directed RNA polymerase NS5; this interaction stimulates RNA-directed RNA polymerase NS5 guanylyltransferase activity. Interacts with non-structural protein 2A. Interacts with host SHFL; this interaction promotes NS3 degradation via a lysosome-dependent pathway. Interacts with host CEP63; this interaction disorganizes the centrosome and inhibits host innate immune response. As to quaternary structure, may interact with host ANKLE2; the interaction may cause defects in brain development, such as microcephaly. May interact with host SRPRA and SEC61G. In terms of assembly, interacts with serine protease NS3. Interacts with NS1. Interacts with host TBK1. Homodimer. Interacts with host STAT2; this interaction inhibits the phosphorylation of the latter, and, when all viral proteins are present (polyprotein), targets STAT2 for degradation. Interacts with host TBK1 and IKBKE; these interactions lead to the inhibition of the host RIG-I signaling pathway. Interacts with host KPNA2. Interacts with host PAF1 complex; the interaction may prevent the recruitment of the host PAF1 complex to interferon-responsive genes, and thus reduces the immune response. Interacts with serine protease NS3. Interacts with host ZSWIM8; this interaction allows STAT2 binding to ZSWIM8 and subsequent proteasomal degradation leading to inhibition of interferon signaling. Post-translationally, specific enzymatic cleavages in vivo yield mature proteins. Cleavages in the lumen of endoplasmic reticulum are performed by host signal peptidase, whereas cleavages in the cytoplasmic side are performed by serine protease NS3. Signal cleavage at the 2K-4B site requires a prior NS3 protease-mediated cleavage at the 4A-2K site. Cleaved in post-Golgi vesicles by a host furin, releasing the mature small envelope protein M, and peptide pr. This cleavage is incomplete as up to 30% of viral particles still carry uncleaved prM. In terms of processing, N-glycosylation plays a role in virulence in mammalian and mosquito hosts, but may have no effect on neurovirulence. Post-translationally, ubiquitination by host TRIM7 promotes virus attachment and fusion of the virus and the host endosome membrane. N-glycosylated. The excreted form is glycosylated, which is required for efficient secretion of the protein from infected cells. In terms of processing, acetylated by host KAT5. Acetylation modulates NS3 RNA-binding and unwinding activities and plays an important positive role for viral replication. Post-translationally, phosphorylated on serines residues. This phosphorylation may trigger NS5 nuclear localization. Sumoylated, required for regulating IFN induced interferon stimulated genes/ISGs.

The protein localises to the virion. It is found in the host nucleus. Its subcellular location is the host cytoplasm. The protein resides in the host perinuclear region. It localises to the secreted. The protein localises to the virion membrane. It is found in the host endoplasmic reticulum membrane. The enzyme catalyses Selective hydrolysis of -Xaa-Xaa-|-Yaa- bonds in which each of the Xaa can be either Arg or Lys and Yaa can be either Ser or Ala.. It carries out the reaction RNA(n) + a ribonucleoside 5'-triphosphate = RNA(n+1) + diphosphate. It catalyses the reaction a ribonucleoside 5'-triphosphate + H2O = a ribonucleoside 5'-diphosphate + phosphate + H(+). The catalysed reaction is ATP + H2O = ADP + phosphate + H(+). The enzyme catalyses a 5'-end (5'-triphosphoguanosine)-ribonucleoside in mRNA + S-adenosyl-L-methionine = a 5'-end (N(7)-methyl 5'-triphosphoguanosine)-ribonucleoside in mRNA + S-adenosyl-L-homocysteine. It carries out the reaction a 5'-end (N(7)-methyl 5'-triphosphoguanosine)-ribonucleoside in mRNA + S-adenosyl-L-methionine = a 5'-end (N(7)-methyl 5'-triphosphoguanosine)-(2'-O-methyl-ribonucleoside) in mRNA + S-adenosyl-L-homocysteine + H(+). In terms of biological role, plays a role in virus budding by binding to the host cell membrane and packages the viral RNA into a nucleocapsid that forms the core of the mature virus particle. During virus entry, may induce genome penetration into the host cytoplasm after hemifusion induced by the surface proteins. Can migrate to the cell nucleus where it modulates host functions. Inhibits the integrated stress response (ISR) in the infected cell. Inhibits RNA silencing by interfering with host Dicer. Its function is as follows. Prevents premature fusion activity of envelope proteins in trans-Golgi by binding to envelope protein E at pH 6.0. After virion release in extracellular space, gets dissociated from E dimers. Functionally, plays a role in host immune defense modulation and protection of envelope protein E during virion synthesis. PrM-E cleavage is inefficient, many virions are only partially matured and immature prM-E proteins could play a role in immune evasion. Contributes to fetal microcephaly in humans. Acts as a chaperone for envelope protein E during intracellular virion assembly by masking and inactivating envelope protein E fusion peptide. prM is the only viral peptide matured by host furin in the trans-Golgi network probably to avoid catastrophic activation of the viral fusion activity in acidic Golgi compartment prior to virion release. In terms of biological role, may play a role in virus budding. Exerts cytotoxic effects by activating a mitochondrial apoptotic pathway through M ectodomain. May display a viroporin activity. Binds to host cell surface receptors and mediates fusion between viral and cellular membranes. Efficient virus attachment to cell is, at least in part, mediated by host HAVCR1 in a cell-type specific manner. In addition, host NCAM1 can also be used as entry receptor. Interaction with host HSPA5 plays an important role in the early stages of infection as well. Envelope protein is synthesized in the endoplasmic reticulum and forms a heterodimer with protein prM. The heterodimer plays a role in virion budding in the ER, and the newly formed immature particle is covered with 60 spikes composed of heterodimers between precursor prM and envelope protein E. The virion is transported to the Golgi apparatus where the low pH causes the dissociation of PrM-E heterodimers and formation of E homodimers. PrM-E cleavage is inefficient, many virions are only partially matured and immature prM-E proteins could play a role in immune evasion. Its function is as follows. Plays a role in the inhibition of host RLR-induced interferon-beta activation by targeting TANK-binding kinase 1/TBK1. In addition, recruits the host deubiquitinase USP8 to cleave 'Lys-11'-linked polyubiquitin chains from caspase-1/CASP1 thus inhibiting its proteasomal degradation. In turn, stabilized CASP1 promotes cleavage of cGAS, which inhibits its ability to recognize mitochondrial DNA release and initiate type I interferon signaling. Functionally, component of the viral RNA replication complex that recruits genomic RNA, the structural protein prM/E complex, and the NS2B/NS3 protease complex to the virion assembly site and orchestrates virus morphogenesis. Antagonizes also the host MDA5-mediated induction of alpha/beta interferon antiviral response. May disrupt adherens junction formation and thereby impair proliferation of radial cells in the host cortex. In terms of biological role, required cofactor for the serine protease function of NS3. Displays three enzymatic activities: serine protease, NTPase and RNA helicase. NS3 serine protease, in association with NS2B, performs its autocleavage and cleaves the polyprotein at dibasic sites in the cytoplasm: C-prM, NS2A-NS2B, NS2B-NS3, NS3-NS4A, NS4A-2K and NS4B-NS5. NS3 RNA helicase binds RNA and unwinds dsRNA in the 3' to 5' direction. Leads to translation arrest when expressed ex vivo. Disrupts host centrosome organization in a CEP63-dependent manner to degrade host TBK1 and inhibits innate immune response. Inhibits the integrated stress response (ISR) in the infected cell. Its function is as follows. Regulates the ATPase activity of the NS3 helicase activity. NS4A allows NS3 helicase to conserve energy during unwinding. Cooperatively with NS4B suppresses the Akt-mTOR pathway and leads to cellular dysregulation. By inhibiting host ANKLE2 functions, may cause defects in brain development, such as microcephaly. Also antagonizes the host MDA5-mediated induction of alpha/beta interferon antiviral response. Inhibits the integrated stress response (ISR) in the infected cell. Functionally, functions as a signal peptide for NS4B and is required for the interferon antagonism activity of the latter. In terms of biological role, induces the formation of ER-derived membrane vesicles where the viral replication takes place. Also plays a role in the inhibition of host RLR-induced interferon-beta production at TANK-binding kinase 1/TBK1 level. Cooperatively with NS4A suppresses the Akt-mTOR pathway and leads to cellular dysregulation. Replicates the viral (+) and (-) RNA genome, and performs the capping of genomes in the cytoplasm. Methylates viral RNA cap at guanine N-7 and ribose 2'-O positions. Once sufficient NS5 is expressed, binds to the cap-proximal structure and inhibits further translation of the viral genome. Besides its role in RNA genome replication, also prevents the establishment of a cellular antiviral state by blocking the interferon-alpha/beta (IFN-alpha/beta) signaling pathway. Mechanistically, interferes with host kinases TBK1 and IKKE upstream of interferon regulatory factor 3/IRF3 to inhibit the RIG-I pathway. Also antagonizes type I interferon signaling by targeting STAT2 for degradation by the proteasome thereby preventing activation of JAK-STAT signaling pathway. Mechanistically, acts as a scaffold protein to connect host ZSWIM8/CUL3 ligase complex and STAT2, leading to STAT2 degradation. Within the host nucleus, disrupts host SUMO1 and STAT2 co-localization with PML, resulting in PML degradation. May also reduce immune responses by preventing the recruitment of the host PAF1 complex to interferon-responsive genes. The protein is Genome polyprotein of Aedes aegypti (Yellowfever mosquito).